A 240-amino-acid chain; its full sequence is 2,3,4,5-tetrahydropyridine-2,6-dicarboxylate N-acetyltransferase (240 aa).

This sequence belongs to the transferase hexapeptide repeat family. DapH subfamily.

The enzyme catalyses (S)-2,3,4,5-tetrahydrodipicolinate + acetyl-CoA + H2O = L-2-acetamido-6-oxoheptanedioate + CoA. Its pathway is amino-acid biosynthesis; L-lysine biosynthesis via DAP pathway; LL-2,6-diaminopimelate from (S)-tetrahydrodipicolinate (acetylase route): step 1/3. Its function is as follows. Catalyzes the transfer of an acetyl group from acetyl-CoA to tetrahydrodipicolinate. The polypeptide is 2,3,4,5-tetrahydropyridine-2,6-dicarboxylate N-acetyltransferase (Bacillus mycoides (strain KBAB4) (Bacillus weihenstephanensis)).